The chain runs to 733 residues: Vinexin (733 aa).

Disordered regions lie at residues 1–51 (MARI…SNLD), 129–165 (TWPG…RQDK), 224–285 (SARA…NQVP), and 352–448 (ETRL…KRKA). Residues 32-42 (DPNRVHTKEQL) are compositionally biased toward basic and acidic residues. Over residues 147–157 (QHAQNWSATWT) the composition is skewed to polar residues. The SoHo domain occupies 164–232 (DKRWVKYEGI…VSARASSAEP (69 aa)). Polar residues-rich tracts occupy residues 245-256 (PGTTETSSGRNW) and 264-277 (RNTF…SSSG). A phosphoserine mark is found at Ser412 and Ser459. SH3 domains follow at residues 444-503 (KKRK…VLPA) and 518-579 (LEYG…INRE). Residues 444 to 579 (KKRKAARLKF…PASYVQINRE (136 aa)) are binds to vinculin. A disordered region spans residues 584–672 (LCDDGPQLPA…INLGPSSPNT (89 aa)). Phosphoserine; by MAPK1 is present on Ser594. A compositionally biased stretch (low complexity) spans 597 to 613 (PTTTAHLSSHSHPSSIP). 3 positions are modified to phosphoserine: Ser607, Ser610, and Ser624. The segment covering 638-651 (EPRSQTQSLNTPGP) has biased composition (polar residues). The SH3 3 domain occupies 674 to 733 (IHWTPYRAMYQYRPQNEDELELREGDRVDVMQQCDDGWFVGVSRRTQKFGTFPGNYVAPV). Residues 674 to 733 (IHWTPYRAMYQYRPQNEDELELREGDRVDVMQQCDDGWFVGVSRRTQKFGTFPGNYVAPV) form a binds to SOS region.

Interacts with vinculin by the first two SH3 domains and the proline rich region of vinculin. Binds to SOS (guanine nucleotide exchange factor of RAS and RAC), through its third SH3 domain. The formation of this complex is down-regulated by phosphorylation of SOS. Interacts with SAFB2, INPPL1/SHIP2 and SRCIN1. Interacts with DLG5 through its third SH3 domain. Interacts with SOCS7 and MAPK1/ERK2. Interacts with FASLG. Post-translationally, phosphorylated at Ser-594 by MAPK1/ERK2 during cell spreading.

It localises to the cell junction. The protein localises to the focal adhesion. It is found in the cytoplasm. Its subcellular location is the cytoskeleton. Promotes up-regulation of actin stress fiber formation. This Mus musculus (Mouse) protein is Vinexin (Sorbs3).